A 311-amino-acid chain; its full sequence is Putative ribose-phosphate pyrophosphokinase 2 (311 aa).

ATP is bound by residues 38 to 40 (DGE) and 97 to 98 (RQ). 2 residues coordinate Mg(2+): His-131 and Asp-171. Asp-219 lines the D-ribose 5-phosphate pocket.

This sequence belongs to the ribose-phosphate pyrophosphokinase family. Class I subfamily. In terms of assembly, homohexamer. Mg(2+) serves as cofactor.

The protein localises to the cytoplasm. The catalysed reaction is D-ribose 5-phosphate + ATP = 5-phospho-alpha-D-ribose 1-diphosphate + AMP + H(+). Its pathway is metabolic intermediate biosynthesis; 5-phospho-alpha-D-ribose 1-diphosphate biosynthesis; 5-phospho-alpha-D-ribose 1-diphosphate from D-ribose 5-phosphate (route I): step 1/1. Functionally, involved in the biosynthesis of the central metabolite phospho-alpha-D-ribosyl-1-pyrophosphate (PRPP) via the transfer of pyrophosphoryl group from ATP to 1-hydroxyl of ribose-5-phosphate (Rib-5-P). In Listeria monocytogenes serotype 4b (strain F2365), this protein is Putative ribose-phosphate pyrophosphokinase 2.